The sequence spans 232 residues: Large ribosomal subunit protein uL1 (232 aa).

This sequence belongs to the universal ribosomal protein uL1 family. Part of the 50S ribosomal subunit.

Its function is as follows. Binds directly to 23S rRNA. The L1 stalk is quite mobile in the ribosome, and is involved in E site tRNA release. In terms of biological role, protein L1 is also a translational repressor protein, it controls the translation of the L11 operon by binding to its mRNA. This is Large ribosomal subunit protein uL1 from Clostridium novyi (strain NT).